A 1472-amino-acid chain; its full sequence is MLVMGRDHKLYYEAYNDASDLDGDGVLDVGYKPDKITYYGYYNSNVCYRANGTMFQAMSVANGSNGKKCTGAWSGDFLNYLTTSRMDALRKVLFGGYREVDTLTQTILRASYTPQDAHSWGKEYASVSHDGYDISDYAPLSAPGSGHYHLFAVTTLSDNGIPQLRVLADTTFRVWNWVSIERPVAGSDCFTPENKRVSCVSGGSRGISDYPLRVEVCSVADELRESNCKLYQNNTSYKPTGILHDYGENDRMYFGLLTGSYQKNITGGVLHSNVSNFSREINPLTGQFCLNGNCGGGGDVKGIVHTISSFRMLDFNYKDYTYGCGWIATRPVKEGECWMWGNPVAEMMYETLRYFGGATAPRPEYDINSSSQDIATLQLSHPGWKPPYTSVDKGGSGYSVCAQPTMTVFSDINPSYDDKLPGSHWSNFSGSGDPASMRNLDVSAEADRIWEAEGGGSKLFFIGESNNNSDNAPTPKVVSNLSTVRGLSPEEPSKGGTYYSAAVARYGANHKMGGSKFVRTYAVALASPLPKFEFPVGNARVSLVPFAKSVRGFGISATGNFQPTNQIIDFYVQRVANMAGSSGADYDATINGGRPYAEFRINYEDVEQGADHDMDAIALYTIYVNAKNQLVVTLKSEYSAGSIDQHMGYVISGTTRDGVYLEICDLADGHSNDGTRSSCAGQQPYKLNTPPNRLPGYCNATPMPGDCNGLPPVATRIFSVASQGANAVLLKDPLWYAAKYGHDQGVILNSSGGLANYFPVNNALYLRQQVAKAFSAIQSQAGSSGSIAVVGASVSSTSFAVIPSYSSTHDGKDWTGEMTAYRIDANGMIGDVLWLASAGVPSGTSAIAKRVIYTALSHVDDTNRASVVRRFVAEKLVDSSSGDVATDAAQVFGRLGYTPRGVIDDFGSSVTPNQLVNYLRGDKRMEGATLNTAPFRRRFGPLGDMINSIPVVATRRANYGWATASGLPQVQRDSYSAFINARQNSTAAEHIFVGANDGMLHAFDDKGTERFAYVPNGVLHHLGFLANPEYQHHYYVDGKSTLSDAYLDGSWRSVLVGGTGAGGRSMFALDVTSPSTFNESNVLWEMNSENDDDMGYTMGKPYIVPLQNGSWAAIFGNGYNSTNGRAVLFIVNLATGQLIRKIEARDGIDPDGSDPANMGYNGLGNLAVLDTDGDGLVDMVYGADLHGNLWKFNLSGKDPQRWGIAYKDGLGNPIPLFVARNPQGYRQPITGGLEVAVGPSAGYIIYFGSGRYFAANDNNSKDLSTLYGIWDSGSPVIAGRAALSAQIIQASDHPTSPDTRIVTRRPLSYLSKHGWYVDLVVQGQDPQGERSIATPLLQGGRVFFSTYVPGVSVNCASGGSNWLYVLDAASGGAALGQVNIPSRGSRSSIGNSDTGAVSTGGDAPIQSVAMTRTAPRQPVFCNPGEQGCPLVPETHAAPLDTRCSEVIIDPNDPTRSISLFRACGRQSWRQLR.

Positions 1170, 1172, 1174, 1176, and 1178 each coordinate Ca(2+). Polar residues predominate over residues 1383 to 1397 (RGSRSSIGNSDTGAV). The interval 1383–1403 (RGSRSSIGNSDTGAVSTGGDA) is disordered.

This sequence belongs to the PilY1 family.

It localises to the fimbrium. Its function is as follows. One of the three PilY1 homologs of X.fastidiosa, which are involved in bacterial twitching motility as component of the filamentous type IV pili (T4P). The twitching motility of this protein is enhanced by calcium, which may provide the bacterium an adaptive advantage in environments with high calcium concentrations. The protein is Type IV pilus biogenesis factor PilY1 homolog PD_1611 of Xylella fastidiosa (strain Temecula1 / ATCC 700964).